The chain runs to 498 residues: Ribulose bisphosphate carboxylase large chain (498 aa).

A propeptide spanning residues 1 to 2 (MS) is cleaved from the precursor. Pro-3 bears the N-acetylproline mark. An N6,N6,N6-trimethyllysine modification is found at Lys-14. Substrate is bound by residues Asn-123 and Thr-173. The active-site Proton acceptor is Lys-175. Lys-177 provides a ligand contact to substrate. Lys-201, Asp-203, and Glu-204 together coordinate Mg(2+). Lys-201 is modified (N6-carboxylysine). The active-site Proton acceptor is the His-294. Residues Arg-295, His-327, and Ser-379 each coordinate substrate. The disordered stretch occupies residues 473-498 (DTLDPNDKKQRDNEDTLADKFFGDKG).

The protein belongs to the RuBisCO large chain family. Type I subfamily. In terms of assembly, heterohexadecamer of 8 large chains and 8 small chains; disulfide-linked. The disulfide link is formed within the large subunit homodimers. Requires Mg(2+) as cofactor. Post-translationally, the disulfide bond which can form in the large chain dimeric partners within the hexadecamer appears to be associated with oxidative stress and protein turnover.

Its subcellular location is the plastid. The enzyme catalyses 2 (2R)-3-phosphoglycerate + 2 H(+) = D-ribulose 1,5-bisphosphate + CO2 + H2O. The catalysed reaction is D-ribulose 1,5-bisphosphate + O2 = 2-phosphoglycolate + (2R)-3-phosphoglycerate + 2 H(+). RuBisCO catalyzes two reactions: the carboxylation of D-ribulose 1,5-bisphosphate, the primary event in carbon dioxide fixation, as well as the oxidative fragmentation of the pentose substrate in the photorespiration process. Both reactions occur simultaneously and in competition at the same active site. This chain is Ribulose bisphosphate carboxylase large chain, found in Cuscuta exaltata (Tall dodder).